Consider the following 304-residue polypeptide: Putative S-adenosyl-L-methionine-dependent methyltransferase MAV_4236 (304 aa).

S-adenosyl-L-methionine contacts are provided by residues Asp-129 and 158-159; that span reads DL.

The protein belongs to the UPF0677 family.

Exhibits S-adenosyl-L-methionine-dependent methyltransferase activity. The sequence is that of Putative S-adenosyl-L-methionine-dependent methyltransferase MAV_4236 from Mycobacterium avium (strain 104).